A 331-amino-acid chain; its full sequence is DNA-directed RNA polymerase subunit alpha (331 aa).

Positions 1 to 233 (MVREEIAVST…DLFLPFLHAE (233 aa)) are alpha N-terminal domain (alpha-NTD). The alpha C-terminal domain (alpha-CTD) stretch occupies residues 268–331 (ALKRVFIDQS…GILQKRFAID (64 aa)).

The protein belongs to the RNA polymerase alpha chain family. As to quaternary structure, in plastids the minimal PEP RNA polymerase catalytic core is composed of four subunits: alpha, beta, beta', and beta''. When a (nuclear-encoded) sigma factor is associated with the core the holoenzyme is formed, which can initiate transcription.

It localises to the plastid. Its subcellular location is the chloroplast. The enzyme catalyses RNA(n) + a ribonucleoside 5'-triphosphate = RNA(n+1) + diphosphate. Its function is as follows. DNA-dependent RNA polymerase catalyzes the transcription of DNA into RNA using the four ribonucleoside triphosphates as substrates. This chain is DNA-directed RNA polymerase subunit alpha, found in Illicium oligandrum (Star anise).